The following is a 1024-amino-acid chain: RNA cytidine acetyltransferase (1024 aa).

287–296 (GRGKSAALGL) provides a ligand contact to ATP. The residue at position 426 (Lys-426) is an N6-acetyllysine. Arg-470 contributes to the ATP binding site. Residues 558 to 753 (CLLPPVPPTQ…HSCIMLKTLA (196 aa)) enclose the N-acetyltransferase domain. Residues 629-631 (IAV) and 636-642 (QGMGYGS) contribute to the acetyl-CoA site. The interval 702-1024 (PAERLDYLGV…RKDMKLKRKK (323 aa)) is required for localization to the nucleolus and midbody. Position 716 is a phosphothreonine (Thr-716). Residue Arg-725 participates in acetyl-CoA binding. A phosphoserine mark is found at Ser-934, Ser-984, and Ser-987. The interval 990–1024 (SDKKRKLETKQEPKQSKKLKKRDNNRKDMKLKRKK) is disordered. The span at 1005–1024 (SKKLKKRDNNRKDMKLKRKK) shows a compositional bias: basic residues.

This sequence belongs to the RNA cytidine acetyltransferase family. NAT10 subfamily. In terms of assembly, part of the small subunit (SSU) processome, composed of more than 70 proteins and the RNA chaperone small nucleolar RNA (snoRNA) U3. Interacts with THUMPD1. Interacts with SUN1 (via N-terminus). Interacts with TERT.

Its subcellular location is the nucleus. It is found in the nucleolus. It carries out the reaction a cytidine in 18S rRNA + acetyl-CoA + ATP + H2O = an N(4)-acetylcytidine in 18S rRNA + ADP + phosphate + CoA + H(+). The enzyme catalyses a cytidine in tRNA + acetyl-CoA + ATP + H2O = an N(4)-acetylcytidine in tRNA + ADP + phosphate + CoA + H(+). It catalyses the reaction a cytidine in mRNA + acetyl-CoA + ATP + H2O = an N(4)-acetylcytidine in mRNA + ADP + phosphate + CoA + H(+). Functionally, RNA cytidine acetyltransferase that catalyzes the formation of N(4)-acetylcytidine (ac4C) modification on mRNAs, 18S rRNA and tRNAs. Catalyzes ac4C modification of a broad range of mRNAs, enhancing mRNA stability and translation. mRNA ac4C modification is frequently present within wobble cytidine sites and promotes translation efficiency. Mediates the formation of ac4C at position 1842 in 18S rRNA. May also catalyze the formation of ac4C at position 1337 in 18S rRNA. Required for early nucleolar cleavages of precursor rRNA at sites A0, A1 and A2 during 18S rRNA synthesis. Catalyzes the formation of ac4C in serine and leucine tRNAs. Requires the tRNA-binding adapter protein THUMPD1 for full tRNA acetyltransferase activity but not for 18S rRNA acetylation. In addition to RNA acetyltransferase activity, also able to acetylate lysine residues of proteins, such as histones, microtubules, p53/TP53 and MDM2, in vitro. The relevance of the protein lysine acetyltransferase activity is however unsure in vivo. Activates telomerase activity by stimulating the transcription of TERT, and may also regulate telomerase function by affecting the balance of telomerase subunit assembly, disassembly, and localization. Involved in the regulation of centrosome duplication by acetylating CENATAC during mitosis, promoting SASS6 proteasome degradation. Part of the small subunit (SSU) processome, first precursor of the small eukaryotic ribosomal subunit. During the assembly of the SSU processome in the nucleolus, many ribosome biogenesis factors, an RNA chaperone and ribosomal proteins associate with the nascent pre-rRNA and work in concert to generate RNA folding, modifications, rearrangements and cleavage as well as targeted degradation of pre-ribosomal RNA by the RNA exosome. This is RNA cytidine acetyltransferase from Mus musculus (Mouse).